A 1099-amino-acid chain; its full sequence is R3H domain-containing protein 1 (1099 aa).

Residues 111–146 form a disordered region; that stretch reads SFEKEEKPSKDEAEKEKASDKLPRKMLSRDSSQEYT. The segment covering 112 to 142 has biased composition (basic and acidic residues); that stretch reads FEKEEKPSKDEAEKEKASDKLPRKMLSRDSS. In terms of domain architecture, R3H spans 168 to 231; the sequence is RMMLLKLEQE…SVIVNKTSNT (64 aa). Phosphoserine occurs at positions 187 and 262. The 71-residue stretch at 232-302 folds into the SUZ domain; it reads RIPDQKFNEH…ARDRIFSQDS (71 aa). A disordered region spans residues 267-287; that stretch reads DNQMRIRLKDDRRSKSIEERE. The residue at position 302 (S302) is a Phosphoserine. The disordered stretch occupies residues 331 to 370; that stretch reads RVNKDASGRSTNSHQSSTENELKYSEPRPWSSTDSDSSLR. 2 stretches are compositionally biased toward polar residues: residues 338 to 349 and 360 to 370; these read GRSTNSHQSSTE and WSSTDSDSSLR. A phosphoserine mark is found at S380, S381, and S393. Disordered stretches follow at residues 387–439, 490–537, 583–625, and 797–825; these read VLTR…SSHG, QTGQ…AANH, YIMT…HPVS, and EQVQFPRTTSPCSSQQLQGHQCTAGPPPP. A compositionally biased stretch (low complexity) spans 391-422; that stretch reads GDSSGSSKSIGRLSKTGSESSGSVGSSTGSLS. 2 stretches are compositionally biased toward pro residues: residues 519-532 and 588-611; these read PGPPQPPLPAPPQQ and APPPHPPPPPPPPPPPPPLPPGQP. The span at 797–817 shows a compositional bias: polar residues; it reads EQVQFPRTTSPCSSQQLQGHQ. R929 is modified (asymmetric dimethylarginine; alternate). Residue R929 is modified to Omega-N-methylarginine; alternate. Residues 941–977 are disordered; sequence PPAVLHGHIPNQQGQPGSRHGNRGRRQAKKAASTDLG. Basic residues predominate over residues 960-969; the sequence is HGNRGRRQAK. Position 973 is a phosphoserine (S973).

This chain is R3H domain-containing protein 1 (R3HDM1), found in Homo sapiens (Human).